Consider the following 91-residue polypeptide: Small ribosomal subunit protein uS19 (91 aa).

This sequence belongs to the universal ribosomal protein uS19 family.

Protein S19 forms a complex with S13 that binds strongly to the 16S ribosomal RNA. The protein is Small ribosomal subunit protein uS19 of Lactiplantibacillus plantarum (strain ATCC BAA-793 / NCIMB 8826 / WCFS1) (Lactobacillus plantarum).